A 261-amino-acid chain; its full sequence is Cytochrome c oxidase subunit 3 (261 aa).

The Mitochondrial matrix segment spans residues Met1–Pro15. Residues Trp16–Trp34 traverse the membrane as a helical segment. Residues Phe35 to Met40 lie on the Mitochondrial intermembrane side of the membrane. The chain crosses the membrane as a helical span at residues Leu41–Thr66. Over Phe67–Thr72 the chain is Mitochondrial matrix. The helical transmembrane segment at Leu73 to Ser105 threads the bilayer. Residues Leu106–Glu128 are Mitochondrial intermembrane-facing. The chain crosses the membrane as a helical span at residues Val129–Met152. The Mitochondrial matrix segment spans residues Glu153–Asn155. Residues Arg156–Glu183 traverse the membrane as a helical segment. Over Ala184 to Asp190 the chain is Mitochondrial intermembrane. Residues Gly191–Leu223 traverse the membrane as a helical segment. The Mitochondrial matrix segment spans residues Lys224 to His232. The chain crosses the membrane as a helical span at residues Phe233–Ile256. At Tyr257 to Ser261 the chain is on the mitochondrial intermembrane side.

Belongs to the cytochrome c oxidase subunit 3 family. Component of the cytochrome c oxidase (complex IV, CIV), a multisubunit enzyme composed of 14 subunits. The complex is composed of a catalytic core of 3 subunits MT-CO1, MT-CO2 and MT-CO3, encoded in the mitochondrial DNA, and 11 supernumerary subunits COX4I, COX5A, COX5B, COX6A, COX6B, COX6C, COX7A, COX7B, COX7C, COX8 and NDUFA4, which are encoded in the nuclear genome. The complex exists as a monomer or a dimer and forms supercomplexes (SCs) in the inner mitochondrial membrane with NADH-ubiquinone oxidoreductase (complex I, CI) and ubiquinol-cytochrome c oxidoreductase (cytochrome b-c1 complex, complex III, CIII), resulting in different assemblies (supercomplex SCI(1)III(2)IV(1) and megacomplex MCI(2)III(2)IV(2)).

The protein localises to the mitochondrion inner membrane. It catalyses the reaction 4 Fe(II)-[cytochrome c] + O2 + 8 H(+)(in) = 4 Fe(III)-[cytochrome c] + 2 H2O + 4 H(+)(out). Functionally, component of the cytochrome c oxidase, the last enzyme in the mitochondrial electron transport chain which drives oxidative phosphorylation. The respiratory chain contains 3 multisubunit complexes succinate dehydrogenase (complex II, CII), ubiquinol-cytochrome c oxidoreductase (cytochrome b-c1 complex, complex III, CIII) and cytochrome c oxidase (complex IV, CIV), that cooperate to transfer electrons derived from NADH and succinate to molecular oxygen, creating an electrochemical gradient over the inner membrane that drives transmembrane transport and the ATP synthase. Cytochrome c oxidase is the component of the respiratory chain that catalyzes the reduction of oxygen to water. Electrons originating from reduced cytochrome c in the intermembrane space (IMS) are transferred via the dinuclear copper A center (CU(A)) of subunit 2 and heme A of subunit 1 to the active site in subunit 1, a binuclear center (BNC) formed by heme A3 and copper B (CU(B)). The BNC reduces molecular oxygen to 2 water molecules using 4 electrons from cytochrome c in the IMS and 4 protons from the mitochondrial matrix. The chain is Cytochrome c oxidase subunit 3 (MT-CO3) from Ceratotherium simum (White rhinoceros).